A 728-amino-acid polypeptide reads, in one-letter code: 1,4-alpha-glucan branching enzyme GlgB (728 aa).

The active-site Nucleophile is aspartate 405. The Proton donor role is filled by glutamate 458.

It belongs to the glycosyl hydrolase 13 family. GlgB subfamily. Monomer.

It catalyses the reaction Transfers a segment of a (1-&gt;4)-alpha-D-glucan chain to a primary hydroxy group in a similar glucan chain.. The protein operates within glycan biosynthesis; glycogen biosynthesis. Catalyzes the formation of the alpha-1,6-glucosidic linkages in glycogen by scission of a 1,4-alpha-linked oligosaccharide from growing alpha-1,4-glucan chains and the subsequent attachment of the oligosaccharide to the alpha-1,6 position. The sequence is that of 1,4-alpha-glucan branching enzyme GlgB from Escherichia coli O139:H28 (strain E24377A / ETEC).